The following is a 125-amino-acid chain: Protein ApaG (125 aa).

The ApaG domain maps to 1-125 (MINAPRVCVQ…FRLAIPSLIH (125 aa)).

In Pectobacterium atrosepticum (strain SCRI 1043 / ATCC BAA-672) (Erwinia carotovora subsp. atroseptica), this protein is Protein ApaG.